The primary structure comprises 188 residues: Ion-translocating oxidoreductase complex subunit B (188 aa).

The interval 1 to 26 is hydrophobic; the sequence is MNGVLLAIGVLLPICLASGALLGYAA. In terms of domain architecture, 4Fe-4S spans 32 to 90; that stretch reads QGDPVAERVNALLPQTQCGQCGYPGCKPYAEAIAAGDRINKCPPGGEATIQALADLLDL. Cysteine 49, cysteine 52, cysteine 57, cysteine 73, cysteine 113, cysteine 116, cysteine 119, cysteine 123, cysteine 143, cysteine 146, cysteine 149, and cysteine 153 together coordinate [4Fe-4S] cluster. 4Fe-4S ferredoxin-type domains follow at residues 104 to 133 and 134 to 163; these read RVAY…GAAR and LMHT…MREI.

This sequence belongs to the 4Fe4S bacterial-type ferredoxin family. RnfB subfamily. The complex is composed of six subunits: RnfA, RnfB, RnfC, RnfD, RnfE and RnfG. The cofactor is [4Fe-4S] cluster.

The protein localises to the cell inner membrane. Part of a membrane-bound complex that couples electron transfer with translocation of ions across the membrane. The protein is Ion-translocating oxidoreductase complex subunit B of Pseudomonas paraeruginosa (strain DSM 24068 / PA7) (Pseudomonas aeruginosa (strain PA7)).